A 129-amino-acid chain; its full sequence is Small ribosomal subunit protein uS11 (129 aa).

This sequence belongs to the universal ribosomal protein uS11 family. In terms of assembly, part of the 30S ribosomal subunit. Interacts with proteins S7 and S18. Binds to IF-3.

Located on the platform of the 30S subunit, it bridges several disparate RNA helices of the 16S rRNA. Forms part of the Shine-Dalgarno cleft in the 70S ribosome. The chain is Small ribosomal subunit protein uS11 from Geobacillus stearothermophilus (Bacillus stearothermophilus).